We begin with the raw amino-acid sequence, 333 residues long: Nucleoid-associated protein APL_0429 (333 aa).

It belongs to the YejK family.

Its subcellular location is the cytoplasm. The protein resides in the nucleoid. The protein is Nucleoid-associated protein APL_0429 of Actinobacillus pleuropneumoniae serotype 5b (strain L20).